A 432-amino-acid chain; its full sequence is Adenylosuccinate synthetase (432 aa).

GTP is bound by residues 13–19 and 41–43; these read GDEGKGK and GHT. The active-site Proton acceptor is the aspartate 14. The Mg(2+) site is built by aspartate 14 and glycine 41. Residues 14–17, 39–42, threonine 130, arginine 144, glutamine 225, threonine 240, and arginine 304 contribute to the IMP site; these read DEGK and NAGH. Histidine 42 acts as the Proton donor in catalysis. A substrate-binding site is contributed by 300-306; it reads ATTGRRR. GTP contacts are provided by residues arginine 306, 332–334, and 415–417; these read KLD and STG.

This sequence belongs to the adenylosuccinate synthetase family. As to quaternary structure, homodimer. Requires Mg(2+) as cofactor.

The protein localises to the cytoplasm. The enzyme catalyses IMP + L-aspartate + GTP = N(6)-(1,2-dicarboxyethyl)-AMP + GDP + phosphate + 2 H(+). The protein operates within purine metabolism; AMP biosynthesis via de novo pathway; AMP from IMP: step 1/2. Its function is as follows. Plays an important role in the de novo pathway of purine nucleotide biosynthesis. Catalyzes the first committed step in the biosynthesis of AMP from IMP. The sequence is that of Adenylosuccinate synthetase from Citrobacter koseri (strain ATCC BAA-895 / CDC 4225-83 / SGSC4696).